The following is a 301-amino-acid chain: Homoserine O-acetyltransferase (301 aa).

Residue Cys-142 is the Acyl-thioester intermediate of the active site. Residues Lys-163 and Ser-192 each contribute to the substrate site. His-235 functions as the Proton acceptor in the catalytic mechanism. The active site involves Glu-237. Arg-249 lines the substrate pocket.

The protein belongs to the MetA family. As to quaternary structure, homodimer.

The protein localises to the cytoplasm. It catalyses the reaction L-homoserine + acetyl-CoA = O-acetyl-L-homoserine + CoA. The protein operates within amino-acid biosynthesis; L-methionine biosynthesis via de novo pathway; O-acetyl-L-homoserine from L-homoserine: step 1/1. Its function is as follows. Transfers an acetyl group from acetyl-CoA to L-homoserine, forming acetyl-L-homoserine. Utilizes a ping-pong kinetic mechanism in which the acetyl group of acetyl-CoA is initially transferred to the enzyme to form an acetyl-enzyme intermediate before subsequent transfer to homoserine to form the final product, O-acetylhomoserine. Cannot use succinyl-CoA as the acyl donor. The protein is Homoserine O-acetyltransferase of Bacillus cereus (strain ATCC 10987 / NRS 248).